Reading from the N-terminus, the 200-residue chain is DNA dC-&gt;dU-editing enzyme APOBEC-3H (200 aa).

One can recognise a CMP/dCMP-type deaminase domain in the interval 4–126 (LTAETFRLQF…KPQQKGLRLL (123 aa)). Zn(2+) is bound at residue His54. Glu56 serves as the catalytic Proton donor. The Zn(2+) site is built by Cys85 and Cys88. The stretch at 160–182 (YKMLEELDKNSRAIKRRLERIKI) forms a coiled coil.

This sequence belongs to the cytidine and deoxycytidylate deaminase family. In terms of assembly, homodimer. Interacts with AGO1, AGO2 and AGO3. Zn(2+) serves as cofactor. (Microbial infection) Following infection by some HIV-1 strains, such as isolate BRU/LAI, can be ubiquitinated by a cullin-5-RING E3 ubiquitin-protein ligase complex (ECS complex) hijacked by the HIV-1 Vif protein, leading to its degradation. Ubiquitination by the ECS complex is however less efficent compared to APOBEC3G or APOBEC3G. Expressed in lymphoid organs. Also detected in non-lymphoid tissues including lung, testis, ovary, fetal liver and skin.

It is found in the cytoplasm. The protein resides in the nucleus. Its subcellular location is the P-body. The catalysed reaction is a 2'-deoxycytidine in single-stranded DNA + H2O + H(+) = a 2'-deoxyuridine in single-stranded DNA + NH4(+). APOBEC3H activity is regulated by RNA. While RNA-binding inhibits the DNA deaminase activity, double-stranded RNA is required for HIV-1 restriction by promoting APOBEC3H homodimerization and packaging into retroviral nucleocapsids. Its activity is regulated as follows. (Microbial infection) Antiviral activity is inhibited to some extent by the HIV-1 virion infectivity factor (VIF), that prevents its incorporation into progeny virions by both inhibiting its translation and/or by inducing its ubiquitination and subsequent degradation by the 26S proteasome. Its function is as follows. DNA deaminase (cytidine deaminase) which acts as an inhibitor of retrovirus replication and retrotransposon mobility via deaminase-dependent and -independent mechanisms. The A3H-var/haplotype 2 exhibits antiviral activity against vif-deficient HIV-1. After the penetration of retroviral nucleocapsids into target cells of infection and the initiation of reverse transcription, it can induce the conversion of cytosine to uracil in the minus-sense single-strand viral DNA, leading to G-to-A hypermutations in the subsequent plus-strand viral DNA. The resultant detrimental levels of mutations in the proviral genome, along with a deamination-independent mechanism that works prior to the proviral integration, together exert efficient antiretroviral effects in infected target cells. Selectively targets single-stranded DNA and does not deaminate double-stranded DNA or single- or double-stranded RNA. Exhibits antiviral activity also against T-cell leukemia virus type 1 (HTLV-1) and may inhibit the mobility of LTR and non-LTR retrotransposons. The chain is DNA dC-&gt;dU-editing enzyme APOBEC-3H from Homo sapiens (Human).